A 377-amino-acid chain; its full sequence is Chaperone protein DnaJ (377 aa).

The J domain occupies 5 to 70 (DYYEVLEVSR…EKRTIYDRYG (66 aa)). The CR-type zinc finger occupies 138–215 (GCEKKIDITY…CQGKGYHEET (78 aa)). Residues C151, C154, C167, C170, C189, C192, C203, and C206 each coordinate Zn(2+). 4 CXXCXGXG motif repeats span residues 151–158 (CEECGGTG), 167–174 (CDYCGGQG), 189–196 (CPKCHGEG), and 203–210 (CPSCQGKG).

The protein belongs to the DnaJ family. Homodimer. Zn(2+) is required as a cofactor.

The protein resides in the cytoplasm. Participates actively in the response to hyperosmotic and heat shock by preventing the aggregation of stress-denatured proteins and by disaggregating proteins, also in an autonomous, DnaK-independent fashion. Unfolded proteins bind initially to DnaJ; upon interaction with the DnaJ-bound protein, DnaK hydrolyzes its bound ATP, resulting in the formation of a stable complex. GrpE releases ADP from DnaK; ATP binding to DnaK triggers the release of the substrate protein, thus completing the reaction cycle. Several rounds of ATP-dependent interactions between DnaJ, DnaK and GrpE are required for fully efficient folding. Also involved, together with DnaK and GrpE, in the DNA replication of plasmids through activation of initiation proteins. This Sulfurovum sp. (strain NBC37-1) protein is Chaperone protein DnaJ.